A 195-amino-acid chain; its full sequence is Imidazoleglycerol-phosphate dehydratase (195 aa).

This sequence belongs to the imidazoleglycerol-phosphate dehydratase family.

The protein localises to the cytoplasm. It catalyses the reaction D-erythro-1-(imidazol-4-yl)glycerol 3-phosphate = 3-(imidazol-4-yl)-2-oxopropyl phosphate + H2O. It participates in amino-acid biosynthesis; L-histidine biosynthesis; L-histidine from 5-phospho-alpha-D-ribose 1-diphosphate: step 6/9. In Burkholderia thailandensis (strain ATCC 700388 / DSM 13276 / CCUG 48851 / CIP 106301 / E264), this protein is Imidazoleglycerol-phosphate dehydratase.